A 171-amino-acid chain; its full sequence is Galectin-related protein (171 aa).

In terms of domain architecture, Galectin spans 38 to 170; it reads PFCGHIKGGM…INGDLQLTKL (133 aa).

Functionally, does not bind lactose, and may not bind carbohydrates. The chain is Galectin-related protein (lgalsl) from Xenopus tropicalis (Western clawed frog).